The chain runs to 387 residues: Glutamyl-tRNA reductase 1 (387 aa).

Substrate-binding positions include 45–48 (TCNR), Ser-96, 101–103 (ETD), and Gln-107. Catalysis depends on Cys-46, which acts as the Nucleophile. 175–180 (GAGSVG) serves as a coordination point for NADP(+).

It belongs to the glutamyl-tRNA reductase family. Homodimer.

It catalyses the reaction (S)-4-amino-5-oxopentanoate + tRNA(Glu) + NADP(+) = L-glutamyl-tRNA(Glu) + NADPH + H(+). The protein operates within porphyrin-containing compound metabolism; protoporphyrin-IX biosynthesis; 5-aminolevulinate from L-glutamyl-tRNA(Glu): step 1/2. Its function is as follows. Catalyzes the NADPH-dependent reduction of glutamyl-tRNA(Glu) to glutamate 1-semialdehyde (GSA). This is Glutamyl-tRNA reductase 1 from Pyrobaculum arsenaticum (strain DSM 13514 / JCM 11321 / PZ6).